A 545-amino-acid polypeptide reads, in one-letter code: uncharacterized protein (545 aa).

Disordered stretches follow at residues 1 to 162 and 200 to 250; these read MSSG…DPQE and YPPV…EPPP. Polar residues predominate over residues 86 to 100; it reads NYRSHSSADYLTPNS. Composition is skewed to low complexity over residues 109–128 and 141–152; these read TTPRRLPLQPQQQAPATATK and SGASTSSGTSST. 2 stretches are compositionally biased toward polar residues: residues 212–221 and 228–244; these read SSRTGTLQRT and ISSTPQPQPTYADQMQS. The PDZ domain maps to 458-540; it reads RVLVEKMMPG…VTITLLPAVG (83 aa).

This is an uncharacterized protein from Caenorhabditis elegans.